Here is a 57-residue protein sequence, read N- to C-terminus: Large ribosomal subunit protein uL30 (57 aa).

This sequence belongs to the universal ribosomal protein uL30 family. As to quaternary structure, part of the 50S ribosomal subunit.

The chain is Large ribosomal subunit protein uL30 from Maridesulfovibrio salexigens (strain ATCC 14822 / DSM 2638 / NCIMB 8403 / VKM B-1763) (Desulfovibrio salexigens).